A 224-amino-acid polypeptide reads, in one-letter code: Octanoyltransferase (224 aa).

Residues P45 to W223 form the BPL/LPL catalytic domain. Substrate is bound by residues R87–H94, S154–G156, and G167–A169. Catalysis depends on C185, which acts as the Acyl-thioester intermediate.

The protein belongs to the LipB family.

It localises to the cytoplasm. It catalyses the reaction octanoyl-[ACP] + L-lysyl-[protein] = N(6)-octanoyl-L-lysyl-[protein] + holo-[ACP] + H(+). The protein operates within protein modification; protein lipoylation via endogenous pathway; protein N(6)-(lipoyl)lysine from octanoyl-[acyl-carrier-protein]: step 1/2. Catalyzes the transfer of endogenously produced octanoic acid from octanoyl-acyl-carrier-protein onto the lipoyl domains of lipoate-dependent enzymes. Lipoyl-ACP can also act as a substrate although octanoyl-ACP is likely to be the physiological substrate. The sequence is that of Octanoyltransferase from Prochlorococcus marinus (strain SARG / CCMP1375 / SS120).